The following is a 530-amino-acid chain: Cation transporter HKT2;2 (530 aa).

Residues 1 to 40 are Cytoplasmic-facing; the sequence is MTSIYQEFIHTKCQSFRSIGRYVLHSIVLIYRFVSLHVHP. Helical transmembrane passes span 41-61 and 102-122; these read FWIQLSYFLLISILGSVLLMF and IVVLTLLMLVGGEVFVSFLGL. The Cytoplasmic segment spans residues 123–186; sequence MLRLKHKHNP…DLKRSKRLRW (64 aa). Helical transmembrane passes span 187 to 207 and 260 to 280; these read FLGFVVFSYFVVIHVVGFLLV and GLLLLFIGQILAGNTLYPLFL. The Cytoplasmic segment spans residues 281-317; that stretch reads RILIWFLGKVTKLKDLKLMIKNSDELQYDYLLPKLPT. The next 2 helical transmembrane spans lie at 318-338 and 372-392; these read AFLASTVIGLMASLVTLFGSV and IDCSLIAPAVLVLFIILMYLP. At 393–420 the chain is on the cytoplasmic side; it reads PSTTFALSNGDEKTANKKAKRKLGLVVR. 2 consecutive transmembrane segments (helical) span residues 421-441 and 494-514; these read NLAFSQLACNAVFVIVALITE and SLSGWWSDEGKLLLVSVMLYG. Residues 515–530 lie on the Cytoplasmic side of the membrane; the sequence is RLKAFTKGTGEYWRLW.

Belongs to the TrkH potassium transport family. HKT (TC 2.A.38.3) subfamily.

Its subcellular location is the membrane. In terms of biological role, seems to be involved in regulation of potassium-sodium homeostasis. Seems to act as a potassium-sodium cotransporter, which mediates increased potassium uptake under external sodium accumulation and contributes to salt-tolerance in cultivar indica Pokkali. This chain is Cation transporter HKT2;2, found in Oryza sativa subsp. indica (Rice).